A 178-amino-acid polypeptide reads, in one-letter code: Large ribosomal subunit protein uL6 (178 aa).

It belongs to the universal ribosomal protein uL6 family. Part of the 50S ribosomal subunit.

In terms of biological role, this protein binds to the 23S rRNA, and is important in its secondary structure. It is located near the subunit interface in the base of the L7/L12 stalk, and near the tRNA binding site of the peptidyltransferase center. This chain is Large ribosomal subunit protein uL6, found in Corynebacterium diphtheriae (strain ATCC 700971 / NCTC 13129 / Biotype gravis).